Here is a 115-residue protein sequence, read N- to C-terminus: Large ribosomal subunit protein bL19 (115 aa).

It belongs to the bacterial ribosomal protein bL19 family.

This protein is located at the 30S-50S ribosomal subunit interface and may play a role in the structure and function of the aminoacyl-tRNA binding site. In Streptococcus pyogenes serotype M1, this protein is Large ribosomal subunit protein bL19.